The following is a 489-amino-acid chain: uncharacterized protein (489 aa).

This is an uncharacterized protein from Bacillus subtilis (strain 168).